The primary structure comprises 418 residues: Vacuole membrane protein HFL1 (418 aa).

Topologically, residues 1–5 (MENKL) are extracellular. The helical transmembrane segment at 6–26 (LCWWLYWPCVYSSIIATIISF) threads the bilayer. Topologically, residues 27 to 43 (YTITRHLLNYRKPYEQR) are cytoplasmic. Residues 44–64 (LSIRILLLVPIFSVSCASGII) traverse the membrane as a helical segment. The Extracellular portion of the chain corresponds to 65 to 78 (KPEAAQFYVDPIRE). Residues 79 to 99 (FYEAFVIYTFFTFLTLLLGGE) form a helical membrane-spanning segment. Residues 100–141 (RNIITVLSLNHAPTRHPIPLIGKICKPIDLSDPFDFLFVKKG) are Cytoplasmic-facing. Residues 142-162 (ILQYVWFKPFYCFGTLICSAW) form a helical membrane-spanning segment. At 163-168 (KLPKFE) the chain is on the extracellular side. Residues 169-189 (IFLNVFYNISVTWSLYSLALF) form a helical membrane-spanning segment. Topologically, residues 190 to 205 (WKCLYPELTPYKPWLK) are cytoplasmic. A helical membrane pass occupies residues 206 to 226 (FLCVKLIIFASYWQSIIIQGL). Residues 227 to 246 (VVTGKLGTGNQDRTSGYVYK) lie on the Extracellular side of the membrane. The helical transmembrane segment at 247–267 (NGLLCIEMVPFAILHAVAFPW) threads the bilayer. Topologically, residues 268–418 (NKYTAFSIPY…DVQSRSSMAC (151 aa)) are cytoplasmic. An ATG8-interacting region region spans residues 379–402 (RTFPEDPNYPVVHDYTMGHRYSRS).

The protein belongs to the TMEM184 family. In terms of assembly, interacts with ATG8.

Its subcellular location is the vacuole membrane. In terms of biological role, vacuole membrane protein that recruits ATG8 to facilitate the degradation of vacuolar integral membrane proteins during early-stationary vacuole turnover (EVT) when cells enter stationary phase. The polypeptide is Vacuole membrane protein HFL1 (Saccharomyces cerevisiae (strain ATCC 204508 / S288c) (Baker's yeast)).